The following is a 1388-amino-acid chain: DNA-directed RNA polymerase subunit beta' (1388 aa).

Residues C65, C67, C80, and C83 each coordinate Zn(2+). Positions 456, 458, and 460 each coordinate Mg(2+). C812, C887, C894, and C897 together coordinate Zn(2+).

It belongs to the RNA polymerase beta' chain family. The RNAP catalytic core consists of 2 alpha, 1 beta, 1 beta' and 1 omega subunit. When a sigma factor is associated with the core the holoenzyme is formed, which can initiate transcription. Requires Mg(2+) as cofactor. It depends on Zn(2+) as a cofactor.

It catalyses the reaction RNA(n) + a ribonucleoside 5'-triphosphate = RNA(n+1) + diphosphate. Functionally, DNA-dependent RNA polymerase catalyzes the transcription of DNA into RNA using the four ribonucleoside triphosphates as substrates. The sequence is that of DNA-directed RNA polymerase subunit beta' from Protochlamydia amoebophila (strain UWE25).